The sequence spans 247 residues: Phycocyanobilin:ferredoxin oxidoreductase (247 aa).

The protein belongs to the HY2 family.

The enzyme catalyses (2R,3Z)-phycocyanobilin + 4 oxidized [2Fe-2S]-[ferredoxin] = biliverdin IXalpha + 4 reduced [2Fe-2S]-[ferredoxin] + 4 H(+). Functionally, catalyzes the four-electron reduction of biliverdin IX-alpha (2-electron reduction at both the A and D rings); the reaction proceeds via an isolatable 2-electron intermediate, 181,182-dihydrobiliverdin. The polypeptide is Phycocyanobilin:ferredoxin oxidoreductase (pcyA) (Prochlorococcus marinus (strain SARG / CCMP1375 / SS120)).